We begin with the raw amino-acid sequence, 122 residues long: Selenoprotein H (122 aa).

Lysine 20 bears the N6-acetyllysine mark. The segment at residues 41-44 is a cross-link (cysteinyl-selenocysteine (Cys-Sec); redox-active); sequence CTSU. Selenocysteine 44 is a non-standard amino acid (selenocysteine).

It belongs to the SelWTH family.

May be involved in a redox-related process. This is Selenoprotein H from Macaca fascicularis (Crab-eating macaque).